We begin with the raw amino-acid sequence, 1940 residues long: Myosin-1B (1940 aa).

Residues 33–82 form the Myosin N-terminal SH3-like domain; the sequence is DAKSSVFVVHAKESYVKSTIQSKESGKVTVKTEGGETLTVKEDQIFSMNP. Positions 86 to 783 constitute a Myosin motor domain; that stretch reads DKIEDMAMMT…LLGLLEEMRD (698 aa). Position 130 is an N6,N6,N6-trimethyllysine (lysine 130). 179–186 contributes to the ATP binding site; the sequence is GESGAGKT. Actin-binding regions lie at residues 660 to 682 and 762 to 776; these read LNKL…IPNE and KFGH…GLLG. An IQ domain is found at 786–815; it reads LAQLITRTQARCRGFLMRVEFKKMMERRES. Residues 844 to 1940 adopt a coiled-coil conformation; it reads LLKSAESEKE…EIGKKAESEE (1097 aa). The interval 1912-1940 is disordered; sequence EERADIAESQVNKLRAKSREIGKKAESEE. The segment covering 1928–1940 has biased composition (basic and acidic residues); the sequence is KSREIGKKAESEE.

The protein belongs to the TRAFAC class myosin-kinesin ATPase superfamily. Myosin family. In terms of assembly, muscle myosin is a hexameric protein that consists of 2 heavy chain subunits (MHC), 2 alkali light chain subunits (MLC) and 2 regulatory light chain subunits (MLC-2).

Its subcellular location is the cytoplasm. It localises to the myofibril. In terms of biological role, muscle contraction. This is Myosin-1B (MYH1B) from Gallus gallus (Chicken).